Consider the following 346-residue polypeptide: Selenoprotein V (346 aa).

Disordered regions lie at residues 1–40 (MNNQ…VRTR) and 151–206 (LDPP…PGPT). Residues 151 to 162 (LDPPPEPAPELP) are compositionally biased toward pro residues. Positions 270–273 (CGLU) form a cross-link, cysteinyl-selenocysteine (Cys-Sec); redox-active. Residue Sec273 is a non-standard amino acid, selenocysteine.

This sequence belongs to the SelWTH family. Truncated SELENOV proteins produced by failed UGA/Sec decoding are ubiquitinated by the CRL2(APPBP2) complex, which recognizes the glycine (Gly) at the C-terminus of truncated SELENOV proteins. As to expression, testis specific.

In terms of biological role, may be involved in a redox-related process. In Homo sapiens (Human), this protein is Selenoprotein V.